The sequence spans 414 residues: Enolase (414 aa).

Gln-162 is a (2R)-2-phosphoglycerate binding site. Residue Glu-204 is the Proton donor of the active site. Mg(2+)-binding residues include Asp-239, Glu-280, and Asp-307. (2R)-2-phosphoglycerate is bound by residues Lys-332, Arg-361, Ser-362, and Lys-383. Lys-332 serves as the catalytic Proton acceptor.

This sequence belongs to the enolase family. Mg(2+) serves as cofactor.

It localises to the cytoplasm. It is found in the secreted. Its subcellular location is the cell surface. It carries out the reaction (2R)-2-phosphoglycerate = phosphoenolpyruvate + H2O. Its pathway is carbohydrate degradation; glycolysis; pyruvate from D-glyceraldehyde 3-phosphate: step 4/5. Catalyzes the reversible conversion of 2-phosphoglycerate (2-PG) into phosphoenolpyruvate (PEP). It is essential for the degradation of carbohydrates via glycolysis. This is Enolase from Campylobacter jejuni (strain RM1221).